The following is a 399-amino-acid chain: Acetate kinase (399 aa).

A Mg(2+)-binding site is contributed by N7. K14 contacts ATP. Residue R89 participates in substrate binding. D146 (proton donor/acceptor) is an active-site residue. Residues 206–210 (HIGSG), 280–282 (DFR), and 328–332 (GIGEN) each bind ATP. E382 is a binding site for Mg(2+).

It belongs to the acetokinase family. Homodimer. Requires Mg(2+) as cofactor. It depends on Mn(2+) as a cofactor.

Its subcellular location is the cytoplasm. The enzyme catalyses acetate + ATP = acetyl phosphate + ADP. It participates in metabolic intermediate biosynthesis; acetyl-CoA biosynthesis; acetyl-CoA from acetate: step 1/2. Functionally, catalyzes the formation of acetyl phosphate from acetate and ATP. Can also catalyze the reverse reaction. In Campylobacter hominis (strain ATCC BAA-381 / DSM 21671 / CCUG 45161 / LMG 19568 / NCTC 13146 / CH001A), this protein is Acetate kinase.